A 265-amino-acid polypeptide reads, in one-letter code: tRNA pseudouridine synthase A (265 aa).

The Nucleophile role is filled by Asp58. Residue Tyr116 coordinates substrate.

Belongs to the tRNA pseudouridine synthase TruA family. Homodimer.

The catalysed reaction is uridine(38/39/40) in tRNA = pseudouridine(38/39/40) in tRNA. Its function is as follows. Formation of pseudouridine at positions 38, 39 and 40 in the anticodon stem and loop of transfer RNAs. The protein is tRNA pseudouridine synthase A of Neisseria gonorrhoeae (strain NCCP11945).